Here is a 131-residue protein sequence, read N- to C-terminus: uncharacterized protein (131 aa).

The signal sequence occupies residues 1–19 (MRESLFIIFFQFVCHSSNS). Helical transmembrane passes span 33–53 (PLLTWTAPSIDLALSILALFF) and 111–131 (VSFNGDLIIIFVGETIFFFLF).

Its subcellular location is the membrane. This is an uncharacterized protein from Saccharomyces cerevisiae (strain ATCC 204508 / S288c) (Baker's yeast).